The sequence spans 506 residues: Trans-cinnamate 4-monooxygenase (506 aa).

A helical transmembrane segment spans residues 3 to 23 (DFVLLEKALLGLFIATIVAIT). Residues 214–219 (RSRLAQ) and A307 contribute to the (E)-cinnamate site. Residue C448 coordinates heme.

It belongs to the cytochrome P450 family. Heme is required as a cofactor.

Its subcellular location is the membrane. The catalysed reaction is (E)-cinnamate + reduced [NADPH--hemoprotein reductase] + O2 = (E)-4-coumarate + oxidized [NADPH--hemoprotein reductase] + H2O + H(+). It participates in phenylpropanoid metabolism; trans-4-coumarate biosynthesis; trans-4-coumarate from trans-cinnamate: step 1/1. Its function is as follows. Catalyzes the first oxidative step of the phenylpropanoid pathway in higher plants by transforming trans-cinnamate into p-coumarate. The compounds formed by this pathway are essential components for lignification, pollination, and defense against ultraviolet light, predators and pathogens. The protein is Trans-cinnamate 4-monooxygenase (CYP73A10) of Petroselinum crispum (Parsley).